A 511-amino-acid polypeptide reads, in one-letter code: Fas-activated serine/threonine kinase (511 aa).

The RAP domain occupies 439–497 (VVLMLRERWHFCRDGRVLLGSRALRERHLGLMGYQLLPLPFEELESQRGLPQLKSYLRQ).

Belongs to the FAST protein kinase family. As to quaternary structure, interacts with TIA1; the interactions leads to TIA1 phosphorylation. Interacts with TIAR. In terms of processing, autophosphorylated on serine/threonine residues. Activated by dephosphorylation.

The protein localises to the mitochondrion matrix. It catalyses the reaction L-seryl-[Fas-activated protein] + ATP = O-phospho-L-seryl-[Fas-activated protein] + ADP + H(+). It carries out the reaction L-threonyl-[Fas-activated protein] + ATP = O-phospho-L-threonyl-[Fas-activated protein] + ADP + H(+). The enzyme catalyses L-seryl-[protein] + ATP = O-phospho-L-seryl-[protein] + ADP + H(+). The catalysed reaction is L-threonyl-[protein] + ATP = O-phospho-L-threonyl-[protein] + ADP + H(+). In terms of biological role, phosphorylates the splicing regulator TIA1, thereby promoting the inclusion of FAS exon 6, which leads to an mRNA encoding a pro-apoptotic form of the receptor. Required for the biogenesis of some mitochondrial-encoded mRNAs, specifically stabilizes ND6 (NADH dehydrogenase complex subunit 6) mRNA, and regulates its levels. The protein is Fas-activated serine/threonine kinase (Fastk) of Mus musculus (Mouse).